An 87-amino-acid polypeptide reads, in one-letter code: Putative regulatory protein BCQ_3657 (87 aa).

Belongs to the RemA family.

The sequence is that of Putative regulatory protein BCQ_3657 from Bacillus cereus (strain Q1).